The primary structure comprises 312 residues: MKKIQLNSIASSCSLSGQRLDLVLSKLFREYSRSYLKKLIIMNQVLVNESIVNQPDKKILGGETLTIHPFSKDLLVDIPENIFLDIVYEDSDILIINKPAGLVVHPGSGNKSGTILNALLYHYKNSKDLPRAGIVHRLDKDTSGLMVIAKNIFSYNHLLLLLKEKKIIREYEGIVHGKMIAGGTINKPIMRHYNRRTCMMVHHLGKPSVTHYKVLSRFKFHTHIAIRLETGRTHQIRVHMLHIKYPLVGDPCYSGFKIQSNYRKDKKTNKIYKFPRQALHANHLSLHHPIKKNVMSWTVPLPQDIQELLLKI.

Positions 18–87 (QRLDLVLSKL…IPENIFLDIV (70 aa)) constitute an S4 RNA-binding domain. The active site involves Asp139.

Belongs to the pseudouridine synthase RluA family.

The protein resides in the cytoplasm. The enzyme catalyses uridine(1911/1915/1917) in 23S rRNA = pseudouridine(1911/1915/1917) in 23S rRNA. Responsible for synthesis of pseudouridine from uracil at positions 1911, 1915 and 1917 in 23S ribosomal RNA. The protein is Ribosomal large subunit pseudouridine synthase D (rluD) of Buchnera aphidicola subsp. Acyrthosiphon pisum (strain APS) (Acyrthosiphon pisum symbiotic bacterium).